The chain runs to 405 residues: Histidine decarboxylase (405 aa).

His121 lines the substrate pocket. An N6-(pyridoxal phosphate)lysine modification is found at Lys234.

Belongs to the group II decarboxylase family. In terms of assembly, homotetramer. Pyridoxal 5'-phosphate is required as a cofactor.

The catalysed reaction is L-histidine + H(+) = histamine + CO2. It functions in the pathway siderophore biosynthesis; pseudomonine biosynthesis. The polypeptide is Histidine decarboxylase (Pseudomonas fluorescens).